A 225-amino-acid chain; its full sequence is Phosphoribosylformylglycinamidine synthase subunit PurQ (225 aa).

The Glutamine amidotransferase type-1 domain maps to 4–225; the sequence is RVGVITFPGT…YSVLDSVISA (222 aa). The active-site Nucleophile is cysteine 87. Catalysis depends on residues histidine 196 and glutamate 198.

In terms of assembly, part of the FGAM synthase complex composed of 1 PurL, 1 PurQ and 2 PurS subunits.

It localises to the cytoplasm. The catalysed reaction is N(2)-formyl-N(1)-(5-phospho-beta-D-ribosyl)glycinamide + L-glutamine + ATP + H2O = 2-formamido-N(1)-(5-O-phospho-beta-D-ribosyl)acetamidine + L-glutamate + ADP + phosphate + H(+). It catalyses the reaction L-glutamine + H2O = L-glutamate + NH4(+). It functions in the pathway purine metabolism; IMP biosynthesis via de novo pathway; 5-amino-1-(5-phospho-D-ribosyl)imidazole from N(2)-formyl-N(1)-(5-phospho-D-ribosyl)glycinamide: step 1/2. Its function is as follows. Part of the phosphoribosylformylglycinamidine synthase complex involved in the purines biosynthetic pathway. Catalyzes the ATP-dependent conversion of formylglycinamide ribonucleotide (FGAR) and glutamine to yield formylglycinamidine ribonucleotide (FGAM) and glutamate. The FGAM synthase complex is composed of three subunits. PurQ produces an ammonia molecule by converting glutamine to glutamate. PurL transfers the ammonia molecule to FGAR to form FGAM in an ATP-dependent manner. PurS interacts with PurQ and PurL and is thought to assist in the transfer of the ammonia molecule from PurQ to PurL. The protein is Phosphoribosylformylglycinamidine synthase subunit PurQ of Rhodococcus jostii (strain RHA1).